The chain runs to 358 residues: WD repeat-containing protein 53 (358 aa).

WD repeat units lie at residues 1–38 (MAVK…AWGE), 43–80 (LGHT…VLDV), 85–123 (DSLD…ILDL), 127–166 (KVIR…LWSL), 173–225 (WITN…RIFR), and 232–270 (EQEL…LWDA). The tract at residues 273-311 (EVEKKQKSPTKRTHRKKPKRGTCTKQGGNTNASVTDEEE) is disordered. The segment covering 279 to 294 (KSPTKRTHRKKPKRGT) has biased composition (basic residues). A compositionally biased stretch (polar residues) spans 295 to 306 (CTKQGGNTNASV). One copy of the WD 7 repeat lies at 314–355 (NILPKLNIEHGEKVNWLLGTKIKGHQNILVADQTSCISVYPL).

The protein belongs to the WD repeat WDR53 family.

This is WD repeat-containing protein 53 (WDR53) from Homo sapiens (Human).